We begin with the raw amino-acid sequence, 122 residues long: Large ribosomal subunit protein uL18 (122 aa).

The segment covering 1-19 (MSTLSRKQKTQKRHKRLRR) has biased composition (basic residues). A disordered region spans residues 1–26 (MSTLSRKQKTQKRHKRLRRNLSGTDQ).

Belongs to the universal ribosomal protein uL18 family. As to quaternary structure, part of the 50S ribosomal subunit; part of the 5S rRNA/L5/L18/L25 subcomplex. Contacts the 5S and 23S rRNAs.

In terms of biological role, this is one of the proteins that bind and probably mediate the attachment of the 5S RNA into the large ribosomal subunit, where it forms part of the central protuberance. This is Large ribosomal subunit protein uL18 from Prochlorococcus marinus (strain SARG / CCMP1375 / SS120).